Here is a 350-residue protein sequence, read N- to C-terminus: Anthranilate phosphoribosyltransferase (350 aa).

5-phospho-alpha-D-ribose 1-diphosphate is bound by residues Gly94, 97 to 98 (GD), Thr102, 104 to 107 (NVST), 122 to 130 (KHGNRSVSS), and Ser134. Residue Gly94 participates in anthranilate binding. A Mg(2+)-binding site is contributed by Ser106. Residue Asn125 coordinates anthranilate. Arg180 is a binding site for anthranilate. Residues Asp239 and Glu240 each coordinate Mg(2+).

It belongs to the anthranilate phosphoribosyltransferase family. In terms of assembly, homodimer. Requires Mg(2+) as cofactor.

It carries out the reaction N-(5-phospho-beta-D-ribosyl)anthranilate + diphosphate = 5-phospho-alpha-D-ribose 1-diphosphate + anthranilate. Its pathway is amino-acid biosynthesis; L-tryptophan biosynthesis; L-tryptophan from chorismate: step 2/5. Catalyzes the transfer of the phosphoribosyl group of 5-phosphorylribose-1-pyrophosphate (PRPP) to anthranilate to yield N-(5'-phosphoribosyl)-anthranilate (PRA). The chain is Anthranilate phosphoribosyltransferase from Pelobacter propionicus (strain DSM 2379 / NBRC 103807 / OttBd1).